The following is a 292-amino-acid chain: Glycine--tRNA ligase alpha subunit (292 aa).

Belongs to the class-II aminoacyl-tRNA synthetase family. As to quaternary structure, tetramer of two alpha and two beta subunits.

It localises to the cytoplasm. The enzyme catalyses tRNA(Gly) + glycine + ATP = glycyl-tRNA(Gly) + AMP + diphosphate. The sequence is that of Glycine--tRNA ligase alpha subunit from Synechococcus sp. (strain ATCC 27144 / PCC 6301 / SAUG 1402/1) (Anacystis nidulans).